The primary structure comprises 225 residues: Cytidylate kinase (225 aa).

Residue 12 to 20 (GPSGAGKGT) participates in ATP binding.

It belongs to the cytidylate kinase family. Type 1 subfamily.

The protein resides in the cytoplasm. The enzyme catalyses CMP + ATP = CDP + ADP. It carries out the reaction dCMP + ATP = dCDP + ADP. In Proteus mirabilis (strain HI4320), this protein is Cytidylate kinase.